The sequence spans 702 residues: p-hydroxybenzoic acid--AMP ligase FadD22 (702 aa).

Positions 538-616 (ERHRLVLDAV…GLAQYLEAEL (79 aa)) constitute a Carrier domain. At Ser576 the chain carries O-(pantetheine 4'-phosphoryl)serine.

It belongs to the ATP-dependent AMP-binding enzyme family.

The enzyme catalyses holo-[4-hydroxyphenylalkanoate synthase] + 4-hydroxybenzoate + ATP = 4-hydroxyphenyl-[4-hydroxyphenylalkanoate synthase] + AMP + diphosphate. The protein operates within lipid metabolism; fatty acid biosynthesis. Its function is as follows. Catalyzes the adenylation of p-hydroxybenzoic acid (pHBA) to form p-hydroxybenzoic acid-AMP (pHBA-AMP), which is converted directly to p-hydroxybenzoyl-S-FadD22 (pHBA-S-FAdD22) thioester intermediate in a CoA-independent manner by attack of the phosphopantetheine thiol of FadD22. This intermediate primes the biosynthesis of the phenolphthiocerol (PPOL) by presenting the pHBA starter unit for elongation by Pks15/1. PPOL is an important intermediate in the biosynthesis of phenolic glycolipid (mycosid B). The chain is p-hydroxybenzoic acid--AMP ligase FadD22 (fadD22) from Mycobacterium marinum (strain ATCC BAA-535 / M).